The following is a 777-amino-acid chain: Endonuclease MutS2 (777 aa).

Residue 328–335 (GPNTGGKT) participates in ATP binding. The region spanning 702–777 (LDIRGMNTLE…GDGATEVYLK (76 aa)) is the Smr domain.

The protein belongs to the DNA mismatch repair MutS family. MutS2 subfamily. As to quaternary structure, homodimer. Binds to stalled ribosomes, contacting rRNA.

Functionally, endonuclease that is involved in the suppression of homologous recombination and thus may have a key role in the control of bacterial genetic diversity. Acts as a ribosome collision sensor, splitting the ribosome into its 2 subunits. Detects stalled/collided 70S ribosomes which it binds and splits by an ATP-hydrolysis driven conformational change. Acts upstream of the ribosome quality control system (RQC), a ribosome-associated complex that mediates the extraction of incompletely synthesized nascent chains from stalled ribosomes and their subsequent degradation. Probably generates substrates for RQC. This chain is Endonuclease MutS2, found in Carboxydothermus hydrogenoformans (strain ATCC BAA-161 / DSM 6008 / Z-2901).